A 290-amino-acid polypeptide reads, in one-letter code: Acetylglutamate kinase (290 aa).

Residues 65–66 (GG), arginine 87, and asparagine 186 contribute to the substrate site.

This sequence belongs to the acetylglutamate kinase family. ArgB subfamily.

Its subcellular location is the cytoplasm. The enzyme catalyses N-acetyl-L-glutamate + ATP = N-acetyl-L-glutamyl 5-phosphate + ADP. The protein operates within amino-acid biosynthesis; L-arginine biosynthesis; N(2)-acetyl-L-ornithine from L-glutamate: step 2/4. Catalyzes the ATP-dependent phosphorylation of N-acetyl-L-glutamate. This chain is Acetylglutamate kinase, found in Mycolicibacterium gilvum (strain PYR-GCK) (Mycobacterium gilvum (strain PYR-GCK)).